The following is a 138-amino-acid chain: Small ribosomal subunit protein uS11c (138 aa).

The interval 1–22 (MAKSIPRISSRRNGRIGSGNNV) is disordered.

The protein belongs to the universal ribosomal protein uS11 family. Part of the 30S ribosomal subunit.

It localises to the plastid. The protein is Small ribosomal subunit protein uS11c of Cuscuta reflexa (Southern Asian dodder).